A 175-amino-acid chain; its full sequence is Large ribosomal subunit protein bL17 (175 aa).

Residues 124 to 175 (VKKSKPTAPAQAVATKPAVEETREAAAAQPQEPEVEISEVKDPAEECEAKAD) are disordered. The segment covering 161-175 (SEVKDPAEECEAKAD) has biased composition (basic and acidic residues).

This sequence belongs to the bacterial ribosomal protein bL17 family. As to quaternary structure, part of the 50S ribosomal subunit. Contacts protein L32.

The polypeptide is Large ribosomal subunit protein bL17 (Geobacter sulfurreducens (strain ATCC 51573 / DSM 12127 / PCA)).